The chain runs to 193 residues: Xanthine phosphoribosyltransferase (193 aa).

The xanthine site is built by L20 and T27. 128–132 (ANGQA) contacts 5-phospho-alpha-D-ribose 1-diphosphate. Residue K156 coordinates xanthine.

Belongs to the purine/pyrimidine phosphoribosyltransferase family. Xpt subfamily. Homodimer.

The protein localises to the cytoplasm. The enzyme catalyses XMP + diphosphate = xanthine + 5-phospho-alpha-D-ribose 1-diphosphate. Its pathway is purine metabolism; XMP biosynthesis via salvage pathway; XMP from xanthine: step 1/1. Converts the preformed base xanthine, a product of nucleic acid breakdown, to xanthosine 5'-monophosphate (XMP), so it can be reused for RNA or DNA synthesis. This chain is Xanthine phosphoribosyltransferase, found in Streptococcus pneumoniae (strain P1031).